Here is a 449-residue protein sequence, read N- to C-terminus: Tubulin beta chain (449 aa).

Gln-11, Glu-71, Ser-140, Gly-144, Thr-145, Gly-146, Asn-206, and Asn-228 together coordinate GTP. Residue Glu-71 participates in Mg(2+) binding.

The protein belongs to the tubulin family. Dimer of alpha and beta chains. A typical microtubule is a hollow water-filled tube with an outer diameter of 25 nm and an inner diameter of 15 nM. Alpha-beta heterodimers associate head-to-tail to form protofilaments running lengthwise along the microtubule wall with the beta-tubulin subunit facing the microtubule plus end conferring a structural polarity. Microtubules usually have 13 protofilaments but different protofilament numbers can be found in some organisms and specialized cells. The cofactor is Mg(2+).

The protein localises to the cytoplasm. Its subcellular location is the cytoskeleton. Tubulin is the major constituent of microtubules, a cylinder consisting of laterally associated linear protofilaments composed of alpha- and beta-tubulin heterodimers. Microtubules grow by the addition of GTP-tubulin dimers to the microtubule end, where a stabilizing cap forms. Below the cap, tubulin dimers are in GDP-bound state, owing to GTPase activity of alpha-tubulin. The protein is Tubulin beta chain (TUBB) of Cicer arietinum (Chickpea).